A 394-amino-acid chain; its full sequence is Dual-specificity RNA methyltransferase RlmN (394 aa).

E92 acts as the Proton acceptor in catalysis. The 244-residue stretch at 98 to 341 (ENDRGTLCIS…TTVRRTRGDD (244 aa)) folds into the Radical SAM core domain. A disulfide bond links C105 and C346. 3 residues coordinate [4Fe-4S] cluster: C112, C116, and C119. S-adenosyl-L-methionine is bound by residues 166-167 (GE), S198, 220-222 (SLH), and N303. Catalysis depends on C346, which acts as the S-methylcysteine intermediate. The segment at 374 to 394 (DSAVQRRADAAPSGSATETTR) is disordered.

The protein belongs to the radical SAM superfamily. RlmN family. It depends on [4Fe-4S] cluster as a cofactor.

The protein resides in the cytoplasm. It carries out the reaction adenosine(2503) in 23S rRNA + 2 reduced [2Fe-2S]-[ferredoxin] + 2 S-adenosyl-L-methionine = 2-methyladenosine(2503) in 23S rRNA + 5'-deoxyadenosine + L-methionine + 2 oxidized [2Fe-2S]-[ferredoxin] + S-adenosyl-L-homocysteine. The catalysed reaction is adenosine(37) in tRNA + 2 reduced [2Fe-2S]-[ferredoxin] + 2 S-adenosyl-L-methionine = 2-methyladenosine(37) in tRNA + 5'-deoxyadenosine + L-methionine + 2 oxidized [2Fe-2S]-[ferredoxin] + S-adenosyl-L-homocysteine. In terms of biological role, specifically methylates position 2 of adenine 2503 in 23S rRNA and position 2 of adenine 37 in tRNAs. m2A2503 modification seems to play a crucial role in the proofreading step occurring at the peptidyl transferase center and thus would serve to optimize ribosomal fidelity. The sequence is that of Dual-specificity RNA methyltransferase RlmN from Methylibium petroleiphilum (strain ATCC BAA-1232 / LMG 22953 / PM1).